The chain runs to 386 residues: Probable serine/threonine-protein kinase PBL23 (386 aa).

Cys-5 is lipidated: S-palmitoyl cysteine. The Protein kinase domain occupies 82-360 (FNPDNQLGEG…SDVVTALEYL (279 aa)). ATP contacts are provided by residues 88–96 (LGEGGFGRV) and Lys-111. Residue Asp-210 is the Proton acceptor of the active site. The segment at 365–386 (TEEDGQTVEGEEEEEEDERSKL) is disordered. Acidic residues predominate over residues 368–386 (DGQTVEGEEEEEEDERSKL).

Belongs to the protein kinase superfamily. Ser/Thr protein kinase family.

The protein resides in the cell membrane. The catalysed reaction is L-seryl-[protein] + ATP = O-phospho-L-seryl-[protein] + ADP + H(+). It carries out the reaction L-threonyl-[protein] + ATP = O-phospho-L-threonyl-[protein] + ADP + H(+). Functionally, may be involved in plant defense signaling. This Arabidopsis thaliana (Mouse-ear cress) protein is Probable serine/threonine-protein kinase PBL23.